The sequence spans 375 residues: Homeobox protein Meis3 (375 aa).

Positions Pro-25–Asp-51 are disordered. The segment covering Val-31–Pro-46 has biased composition (pro residues). The MEIS N-terminal domain maps to Gly-96–Asp-179. Disordered regions lie at residues Pro-197 to Ile-268 and Asn-329 to Thr-348. Over residues Ser-227–Asp-241 the composition is skewed to low complexity. The homeobox; TALE-type DNA-binding region spans Arg-262–Met-324.

This sequence belongs to the TALE/MEIS homeobox family.

Its subcellular location is the nucleus. Its function is as follows. Transcriptional regulator which directly modulates PDPK1 expression, thus promoting survival of pancreatic beta-cells. Also regulates expression of NDFIP1, BNIP3, and CCNG1. The chain is Homeobox protein Meis3 (MEIS3) from Homo sapiens (Human).